Here is a 160-residue protein sequence, read N- to C-terminus: Cytochrome b6-f complex subunit 4 (160 aa).

Transmembrane regions (helical) follow at residues 36-56 (LLYI…GLSV), 95-115 (LLGV…PFIE), and 127-147 (PVAM…GIGA).

The protein belongs to the cytochrome b family. PetD subfamily. In terms of assembly, the 4 large subunits of the cytochrome b6-f complex are cytochrome b6, subunit IV (17 kDa polypeptide, petD), cytochrome f and the Rieske protein, while the 4 small subunits are petG, petL, petM and petN. The complex functions as a dimer.

Its subcellular location is the plastid. It localises to the chloroplast thylakoid membrane. Its function is as follows. Component of the cytochrome b6-f complex, which mediates electron transfer between photosystem II (PSII) and photosystem I (PSI), cyclic electron flow around PSI, and state transitions. This Guillardia theta (Cryptophyte) protein is Cytochrome b6-f complex subunit 4.